A 589-amino-acid polypeptide reads, in one-letter code: Cytoplasmic polyadenylation element-binding protein 2 (589 aa).

Disordered regions lie at residues 1–103 (MPPP…QAAA) and 118–140 (PLLKQSPWSNHQSSGWGTGSMSW). The segment covering 24 to 33 (FFPSFSPVSP) has biased composition (low complexity). A compositionally biased stretch (gly residues) spans 44–53 (SGGGGGGFGG). A compositionally biased stretch (pro residues) spans 60–81 (VPPPPPPAMNIPQQQPPPPAAP). Composition is skewed to low complexity over residues 82–103 (QQPQSRRSPVSPQLQQQHQAAA) and 130–140 (SSGWGTGSMSW). Ser-89 bears the Phosphoserine mark. RRM domains lie at 332–423 (RKVF…PWNL) and 440–522 (KTIF…PYVL).

The protein belongs to the RRM CPEB family. In terms of assembly, interacts with TENT2/GLD2.

Its subcellular location is the cytoplasm. May play a role in translational regulation of stored mRNAs in transcriptionally inactive haploid spermatids. Binds to poly(U) RNA oligomers. Required for cell cycle progression, specifically for the transition from metaphase to anaphase. This Homo sapiens (Human) protein is Cytoplasmic polyadenylation element-binding protein 2 (CPEB2).